The chain runs to 730 residues: Propionyl-CoA carboxylase alpha chain, mitochondrial (730 aa).

A mitochondrion-targeting transit peptide spans 1-52 (MAGLWVGGSVLVAAGRRGSRSPRPLMRSVALWTLKHVPQYSRQRLLVSRSLC). The Biotin carboxylation domain maps to 62 to 509 (TFDKILIANR…NTKFLSDVYP (448 aa)). N6-acetyllysine; alternate is present on Lys-65. Lys-65 bears the N6-succinyllysine; alternate mark. Lys-119 carries the post-translational modification N6-succinyllysine. Lys-150 carries the post-translational modification N6-acetyllysine; alternate. The residue at position 150 (Lys-150) is an N6-succinyllysine; alternate. Lys-154 is modified (N6-acetyllysine). An ATP-binding site is contributed by Lys-177. One can recognise an ATP-grasp domain in the interval 181–378 (KLLAKKAKVN…LVQEMIRVAK (198 aa)). Lys-188 carries the post-translational modification N6-succinyllysine. Lys-200 bears the N6-acetyllysine; alternate mark. Lys-200 carries the N6-succinyllysine; alternate modification. Residues 209-270 (AREI…PRHI), Glu-261, and Asn-296 each bind ATP. A Phosphoserine modification is found at Ser-252. Lys-262 is subject to N6-succinyllysine. The Mg(2+) site is built by Glu-336, Glu-349, and Asn-351. Residues Glu-336, Glu-349, and Asn-351 each coordinate Mn(2+). Glu-349 is a catalytic residue. Lys-407 is subject to N6-succinyllysine. Residue Phe-409 coordinates biotin. 3 positions are modified to N6-succinyllysine: Lys-502, Lys-513, and Lys-650. Residues 655–730 (KAAEDTSSIL…GEGDLLVELE (76 aa)) form the Biotinyl-binding domain. An N6-biotinyllysine modification is found at Lys-696.

As to quaternary structure, the holoenzyme is a dodecamer composed of 6 PCCA/alpha subunits and 6 PCCB/beta subunits. Interacts (via the biotin carboxylation domain) with SIRT4. Interacts with SIRT3 and SIRT5. It depends on Mg(2+) as a cofactor. Mn(2+) is required as a cofactor. Requires biotin as cofactor. Post-translationally, acetylated. In terms of processing, the biotin cofactor is covalently attached to the C-terminal biotinyl-binding domain and is required for the catalytic activity. Biotinylation is catalyzed by HLCS.

The protein localises to the mitochondrion matrix. The enzyme catalyses propanoyl-CoA + hydrogencarbonate + ATP = (S)-methylmalonyl-CoA + ADP + phosphate + H(+). It carries out the reaction butanoyl-CoA + hydrogencarbonate + ATP = (2S)-ethylmalonyl-CoA + ADP + phosphate + H(+). It participates in metabolic intermediate metabolism; propanoyl-CoA degradation; succinyl-CoA from propanoyl-CoA: step 1/3. Its function is as follows. This is one of the 2 subunits of the biotin-dependent propionyl-CoA carboxylase (PCC), a mitochondrial enzyme involved in the catabolism of odd chain fatty acids, branched-chain amino acids isoleucine, threonine, methionine, and valine and other metabolites. Propionyl-CoA carboxylase catalyzes the carboxylation of propionyl-CoA/propanoyl-CoA to D-methylmalonyl-CoA/(S)-methylmalonyl-CoA. Within the holoenzyme, the alpha subunit catalyzes the ATP-dependent carboxylation of the biotin carried by the biotin carboxyl carrier (BCC) domain, while the beta subunit then tranfers the carboxyl group from carboxylated biotin to propionyl-CoA. Propionyl-CoA carboxylase also significantly acts on butyryl-CoA/butanoyl-CoA, which is converted to ethylmalonyl-CoA/(2S)-ethylmalonyl-CoA at a much lower rate. Other alternative minor substrates include (2E)-butenoyl-CoA/crotonoyl-CoA. The chain is Propionyl-CoA carboxylase alpha chain, mitochondrial from Sus scrofa (Pig).